The primary structure comprises 265 residues: MTPAPTPRTDQLHGSRVLVIGGTSGIGFAVCAAALGHGAIVTIVGSNAQKLKDSVARLKSSFPSTDPDDIVAVRCDLSNSDTVEQDIEKALQLAAGNSKINHIVITAADMTAPPPLEDLTVDSVQRPGIIRLVAPLMVAKHLPKYMNKCPQSSLTLTSGAHCLRPDPGWTVISGYCGAVEAMSRGLAIDLKPLRVNVVAPGAVLTEAVKDILGDAYDAAVEMAEAKSTVGQTGSPESVAQAYIYLMKDHYASGSVVSTNGGMLLV.

NADP(+)-binding residues include T23, S24, I26, S46, N47, K50, D76, R131, V203, and T205. The helical transmembrane segment at 25–45 (GIGFAVCAAALGHGAIVTIVG) threads the bilayer.

This sequence belongs to the short-chain dehydrogenases/reductases (SDR) family. Requires NADP(+) as cofactor.

It is found in the membrane. It participates in alkaloid biosynthesis. In terms of biological role, short-chain dehydrogenase/reductase; part of the gene cluster that mediates the biosynthesis of paraherquamide, a fungal indole alkaloid that belongs to a family of natural products containing a characteristic bicyclo[2.2.2]diazaoctane core. The first steps in the biosynthesis of paraherquamide is the production of the beta-methyl-proline precursor from L-isoleucine. They require oxidation of a terminally hydroxylated L-isoleucine to the corresponding aldehyde by enzymes which have still to be identified. Spontaneous cyclization and dehydration would yield the 4-methyl pyrolline-5-carboxylic acid, which is then reduced by the pyrroline-5-carboxylate reductase phqD leading to the beta-methyl-proline precursor. The next step of paraherquamide biosynthesis involves coupling of beta-methyl-proline and L-tryptophan by the bimodular NRPS phqB, to produce a monooxopiperazine intermediate. The reductase (R) domain of phqB utilizes NADPH for hydride transfer to reduce the thioester bond of the T domain-tethered linear dipeptide to a hemithioaminal intermediate, which spontaneously cleaves the C-S bond to release the aldehyde product. This compound undergoes spontaneous cyclization and dehydration to give a dienamine which is reverse prenylated at C-2 by the reverse prenyltransferase phqJ. The other prenyltransferase present in the cluster, phqI may be a redundant gene in the pathway. During biosynthetic assembly, the key step to produce the polycyclic core is catalyzed by the bifunctional reductase and intramolecular [4+2] Diels-Alderase, phqE, resulting in formation of the [2.2.2] diazaoctane intermediate preparaherquamide. Following formation of preparaherquamide, an indole 2,3-epoxidation-initiated pinacol-like rearrangement is catalyzed by the phqK FAD-dependent monooxygenase. The prenyltransferase phqA, the cytochrome P450 monooxygenase phqL, and the FAD-linked oxidoreductase phqH (or the cytochrome P450 monooxygenase phqM), are proposed to be involved in the formation of the pyran ring. The FAD-dependent monooxygenase phqK is likely responsible for generation of the spiro-oxindole, and the N-methylation is likely mediated by the phqN methyltransferase leading to the isolable natural product paraherquamide F. However, the order of these biosynthetic steps has still to be determined. In late-stage paraherquamide biosynthesis, the third P450 monooxygenase, phqO, is probably responsible for the C-14 hydroxylation, transforming paraherquamide F to paraherquamide G, and paraherquamide E to the final product paraherquamide A. The expansion from the 6-membered ring pyran (in paraherquamides F and G) to the 7-membered dioxepin ring (in paraherquamides A and E) represents a poorly understood but intriguing process that probably involves the 2-oxoglutarate-dependent dioxygenase phqC. Finally, the remaining members of the paraherquamide cluster, including phqI as well as phqM (or phqH), do not have a clearly prescribed role and appear to be redundant. The protein is Short-chain dehydrogenase/reductase phqE of Penicillium fellutanum.